The chain runs to 249 residues: 5'-nucleotidase SurE (249 aa).

Asp8, Asp9, Ser39, and Asn91 together coordinate a divalent metal cation.

Belongs to the SurE nucleotidase family. Requires a divalent metal cation as cofactor.

It localises to the cytoplasm. It catalyses the reaction a ribonucleoside 5'-phosphate + H2O = a ribonucleoside + phosphate. Nucleotidase that shows phosphatase activity on nucleoside 5'-monophosphates. The polypeptide is 5'-nucleotidase SurE (Pseudomonas aeruginosa (strain LESB58)).